A 248-amino-acid chain; its full sequence is 2-C-methyl-D-erythritol 4-phosphate cytidylyltransferase (248 aa).

The protein belongs to the IspD/TarI cytidylyltransferase family. IspD subfamily.

It carries out the reaction 2-C-methyl-D-erythritol 4-phosphate + CTP + H(+) = 4-CDP-2-C-methyl-D-erythritol + diphosphate. The protein operates within isoprenoid biosynthesis; isopentenyl diphosphate biosynthesis via DXP pathway; isopentenyl diphosphate from 1-deoxy-D-xylulose 5-phosphate: step 2/6. Functionally, catalyzes the formation of 4-diphosphocytidyl-2-C-methyl-D-erythritol from CTP and 2-C-methyl-D-erythritol 4-phosphate (MEP). The polypeptide is 2-C-methyl-D-erythritol 4-phosphate cytidylyltransferase (Corynebacterium efficiens (strain DSM 44549 / YS-314 / AJ 12310 / JCM 11189 / NBRC 100395)).